Consider the following 1012-residue polypeptide: Probable inorganic carbon transporter subunit DabA (1012 aa).

Zn(2+) is bound by residues Cys-489, Asp-491, His-679, and Cys-694.

It belongs to the inorganic carbon transporter (TC 9.A.2) DabA family. In terms of assembly, forms a complex with DabB. Requires Zn(2+) as cofactor.

The protein localises to the cell inner membrane. Its function is as follows. Part of an energy-coupled inorganic carbon pump. The polypeptide is Probable inorganic carbon transporter subunit DabA (Dechloromonas aromatica (strain RCB)).